Consider the following 322-residue polypeptide: Undecaprenyl-phosphate 4-deoxy-4-formamido-L-arabinose transferase (322 aa).

The Cytoplasmic segment spans residues 1 to 235 (MFEIHPVKKV…TCLTTTPLRM (235 aa)). Residues 236–256 (LSLLGSIIAIGGFSIAVLLVI) traverse the membrane as a helical segment. Residues 257 to 269 (LRLTFGPQWAAEG) lie on the Periplasmic side of the membrane. Residues 270–290 (VFMLFAVLFTFIGAQFIGMGL) form a helical membrane-spanning segment. Residues 291–322 (LGEYIGRIYTDVRARPRYFVQQVIRPSSKENE) lie on the Cytoplasmic side of the membrane.

It belongs to the glycosyltransferase 2 family.

It localises to the cell inner membrane. The enzyme catalyses UDP-4-deoxy-4-formamido-beta-L-arabinose + di-trans,octa-cis-undecaprenyl phosphate = 4-deoxy-4-formamido-alpha-L-arabinopyranosyl di-trans,octa-cis-undecaprenyl phosphate + UDP. Its pathway is glycolipid biosynthesis; 4-amino-4-deoxy-alpha-L-arabinose undecaprenyl phosphate biosynthesis; 4-amino-4-deoxy-alpha-L-arabinose undecaprenyl phosphate from UDP-4-deoxy-4-formamido-beta-L-arabinose and undecaprenyl phosphate: step 1/2. The protein operates within bacterial outer membrane biogenesis; lipopolysaccharide biosynthesis. Catalyzes the transfer of 4-deoxy-4-formamido-L-arabinose from UDP to undecaprenyl phosphate. The modified arabinose is attached to lipid A and is required for resistance to polymyxin and cationic antimicrobial peptides. This chain is Undecaprenyl-phosphate 4-deoxy-4-formamido-L-arabinose transferase, found in Shigella dysenteriae serotype 1 (strain Sd197).